The primary structure comprises 508 residues: Photosystem II CP47 reaction center protein (508 aa).

Transmembrane regions (helical) follow at residues 21–36 (AVHIMHTALVAGWAGS), 101–115 (IVFSGLCFLAAIWHW), 140–156 (GIHLFLSGVACFGFGTF), 203–218 (IAAGTLGILAGLFHLS), 237–252 (VLSSSIAAVFFAAFVV), and 457–472 (SFALLFFFGHIWHGAR).

This sequence belongs to the PsbB/PsbC family. PsbB subfamily. As to quaternary structure, PSII is composed of 1 copy each of membrane proteins PsbA, PsbB, PsbC, PsbD, PsbE, PsbF, PsbH, PsbI, PsbJ, PsbK, PsbL, PsbM, PsbT, PsbX, PsbY, PsbZ, Psb30/Ycf12, at least 3 peripheral proteins of the oxygen-evolving complex and a large number of cofactors. It forms dimeric complexes. It depends on Binds multiple chlorophylls. PSII binds additional chlorophylls, carotenoids and specific lipids. as a cofactor.

The protein localises to the plastid. It localises to the chloroplast thylakoid membrane. Its function is as follows. One of the components of the core complex of photosystem II (PSII). It binds chlorophyll and helps catalyze the primary light-induced photochemical processes of PSII. PSII is a light-driven water:plastoquinone oxidoreductase, using light energy to abstract electrons from H(2)O, generating O(2) and a proton gradient subsequently used for ATP formation. This chain is Photosystem II CP47 reaction center protein, found in Citrus sinensis (Sweet orange).